The chain runs to 366 residues: tRNA/tmRNA (uracil-C(5))-methyltransferase (366 aa).

Glutamine 189, tyrosine 217, asparagine 222, glutamate 238, and aspartate 298 together coordinate S-adenosyl-L-methionine. The active-site Nucleophile is cysteine 323. Glutamate 357 acts as the Proton acceptor in catalysis.

It belongs to the class I-like SAM-binding methyltransferase superfamily. RNA M5U methyltransferase family. TrmA subfamily.

The enzyme catalyses uridine(54) in tRNA + S-adenosyl-L-methionine = 5-methyluridine(54) in tRNA + S-adenosyl-L-homocysteine + H(+). It carries out the reaction uridine(341) in tmRNA + S-adenosyl-L-methionine = 5-methyluridine(341) in tmRNA + S-adenosyl-L-homocysteine + H(+). Its function is as follows. Dual-specificity methyltransferase that catalyzes the formation of 5-methyluridine at position 54 (m5U54) in all tRNAs, and that of position 341 (m5U341) in tmRNA (transfer-mRNA). The protein is tRNA/tmRNA (uracil-C(5))-methyltransferase of Photorhabdus laumondii subsp. laumondii (strain DSM 15139 / CIP 105565 / TT01) (Photorhabdus luminescens subsp. laumondii).